Consider the following 207-residue polypeptide: Large ribosomal subunit protein uL4 (207 aa).

The tract at residues 48-75 (THAVKNRSAVSGGGRKPWKQKGTGRARA) is disordered.

This sequence belongs to the universal ribosomal protein uL4 family. As to quaternary structure, part of the 50S ribosomal subunit.

Its function is as follows. One of the primary rRNA binding proteins, this protein initially binds near the 5'-end of the 23S rRNA. It is important during the early stages of 50S assembly. It makes multiple contacts with different domains of the 23S rRNA in the assembled 50S subunit and ribosome. In terms of biological role, forms part of the polypeptide exit tunnel. The protein is Large ribosomal subunit protein uL4 of Leuconostoc citreum (strain KM20).